We begin with the raw amino-acid sequence, 701 residues long: Aryl hydrocarbon receptor repressor (701 aa).

The region spanning 25–78 (TMGAEKSNPSKRHRDRLNTELDHLASLLPFSPDIISKLDKLSVLRLSVSYLRVK) is the bHLH domain. The 71-residue stretch at 106 to 176 (PVQEGRLLLE…RQLHWAMDPP (71 aa)) folds into the PAS domain. The segment covering 409–430 (TEQRSQESTTKLTRQPSKNEPS) has biased composition (polar residues). The segment at 409–432 (TEQRSQESTTKLTRQPSKNEPSTC) is disordered. The needed for transcriptional repression stretch occupies residues 555–701 (ASTTSCLWLG…SKGSDGIFLP (147 aa)). Residues Lys-583 and Lys-660 each participate in a glycyl lysine isopeptide (Lys-Gly) (interchain with G-Cter in SUMO2) cross-link.

Interacts with ARNT, ANKRA2, HDAC4 and HDAC5. Interacts with ARNT; forms a heterodimer with ARNT.

The protein resides in the cytoplasm. The protein localises to the nucleus. Mediates dioxin toxicity and is involved in regulation of cell growth and differentiation. Represses the transcription activity of AHR by competing with this transcription factor for heterodimer formation with the ARNT and subsequently binding to the xenobiotic response element (XRE) sequence present in the promoter regulatory region of variety of genes. Represses CYP1A1 by binding the XRE sequence and recruiting ANKRA2, HDAC4 and/or HDAC5. Autoregulates its expression by associating with its own XRE site. The polypeptide is Aryl hydrocarbon receptor repressor (Ahrr) (Mus musculus (Mouse)).